Here is a 251-residue protein sequence, read N- to C-terminus: NADPH-dependent oxidoreductase (251 aa).

The protein belongs to the flavin oxidoreductase frp family. FMN is required as a cofactor.

Its function is as follows. Reduces FMN, organic nitro compounds and disulfide DTNB. Involved in maintenance of the cellular redox state and the disulfide stress response. This is NADPH-dependent oxidoreductase (nfrA) from Staphylococcus aureus (strain MSSA476).